Consider the following 119-residue polypeptide: Large ribosomal subunit protein uL14 (119 aa).

It belongs to the universal ribosomal protein uL14 family. In terms of assembly, part of the 50S ribosomal subunit. Forms a cluster with proteins L3 and L19. In the 70S ribosome, L14 and L19 interact and together make contacts with the 16S rRNA in bridges B5 and B8.

Its function is as follows. Binds to 23S rRNA. Forms part of two intersubunit bridges in the 70S ribosome. The polypeptide is Large ribosomal subunit protein uL14 (Ehrlichia chaffeensis (strain ATCC CRL-10679 / Arkansas)).